Consider the following 285-residue polypeptide: GPN-loop GTPase 3 (285 aa).

A GTP-binding site is contributed by 13-18 (GSGKST). Residues 72–74 (GPN) carry the Gly-Pro-Asn (GPN)-loop; involved in dimer interface motif. A GTP-binding site is contributed by 174-177 (TKMD). A disordered region spans residues 262 to 285 (EPKEVDEEPSNSNFDAFFQDTADS).

Belongs to the GPN-loop GTPase family. As to quaternary structure, heterodimer with gpn1. Binds to RNA polymerase II (RNAPII).

In terms of biological role, small GTPase required for proper localization of RNA polymerase II (RNAPII). May act at an RNAP assembly step prior to nuclear import. The sequence is that of GPN-loop GTPase 3 from Danio rerio (Zebrafish).